The following is an 85-amino-acid chain: Large ribosomal subunit protein bL27 (85 aa).

The tract at residues 1-22 (MAHKKAGGSTRNGRDSESKRLG) is disordered.

Belongs to the bacterial ribosomal protein bL27 family.

This is Large ribosomal subunit protein bL27 from Vibrio vulnificus (strain CMCP6).